Reading from the N-terminus, the 531-residue chain is CTP synthase (531 aa).

The segment at 1–267 is amidoligase domain; sequence MTKYIIITGG…ASKILSKLNL (267 aa). Residue Ser-13 participates in CTP binding. A UTP-binding site is contributed by Ser-13. 14 to 19 is a binding site for ATP; sequence SVGKGT. Tyr-54 serves as a coordination point for L-glutamine. Asp-71 lines the ATP pocket. The Mg(2+) site is built by Asp-71 and Glu-141. Residues 148 to 150, 188 to 193, and Lys-224 each bind CTP; these read DIE and KTKPLQ. UTP is bound by residues 188 to 193 and Lys-224; that span reads KTKPLQ. The region spanning 292–531 is the Glutamine amidotransferase type-1 domain; that stretch reads KIALVGKYTK…IGFLRAAAGV (240 aa). Gly-355 provides a ligand contact to L-glutamine. Cys-382 (nucleophile; for glutamine hydrolysis) is an active-site residue. Residues 383–386, Glu-406, and Arg-463 contribute to the L-glutamine site; that span reads YGMQ. Catalysis depends on residues His-507 and Glu-509.

It belongs to the CTP synthase family. In terms of assembly, homotetramer.

It catalyses the reaction UTP + L-glutamine + ATP + H2O = CTP + L-glutamate + ADP + phosphate + 2 H(+). The enzyme catalyses L-glutamine + H2O = L-glutamate + NH4(+). The catalysed reaction is UTP + NH4(+) + ATP = CTP + ADP + phosphate + 2 H(+). The protein operates within pyrimidine metabolism; CTP biosynthesis via de novo pathway; CTP from UDP: step 2/2. With respect to regulation, allosterically activated by GTP, when glutamine is the substrate; GTP has no effect on the reaction when ammonia is the substrate. The allosteric effector GTP functions by stabilizing the protein conformation that binds the tetrahedral intermediate(s) formed during glutamine hydrolysis. Inhibited by the product CTP, via allosteric rather than competitive inhibition. Its function is as follows. Catalyzes the ATP-dependent amination of UTP to CTP with either L-glutamine or ammonia as the source of nitrogen. Regulates intracellular CTP levels through interactions with the four ribonucleotide triphosphates. The polypeptide is CTP synthase (Sulfurisphaera tokodaii (strain DSM 16993 / JCM 10545 / NBRC 100140 / 7) (Sulfolobus tokodaii)).